A 185-amino-acid chain; its full sequence is MISAGDFRNGVTIEFEGNIYQIIEFQHVKPGKGAAFVRTKLKNIISGGVVEKTFRPTEKCPTAHIDRKDMQYLYADDDFYHFMDVETYDQIDLPKDEVGDALKFVKENEMCKVCSHKGNVFAVEPPLFVELTVTETEPGFKGDTATGATKPATVETGATVYVPLFVETDDVIKIDTRTGEYLSRV.

It belongs to the elongation factor P family.

The protein localises to the cytoplasm. It participates in protein biosynthesis; polypeptide chain elongation. Involved in peptide bond synthesis. Stimulates efficient translation and peptide-bond synthesis on native or reconstituted 70S ribosomes in vitro. Probably functions indirectly by altering the affinity of the ribosome for aminoacyl-tRNA, thus increasing their reactivity as acceptors for peptidyl transferase. This chain is Elongation factor P, found in Agathobacter rectalis (strain ATCC 33656 / DSM 3377 / JCM 17463 / KCTC 5835 / VPI 0990) (Eubacterium rectale).